A 336-amino-acid polypeptide reads, in one-letter code: Holliday junction branch migration complex subunit RuvB (336 aa).

The large ATPase domain (RuvB-L) stretch occupies residues 4–184 (ADRLISAGTT…FGIVQRLEFY (181 aa)). ATP is bound by residues Ile-23, Arg-24, Gly-65, Lys-68, Thr-69, Thr-70, 131-133 (EDY), Arg-174, Tyr-184, and Arg-221. Thr-69 is a Mg(2+) binding site. The segment at 185–255 (QVPDLQYIVS…IAAQALDMLN (71 aa)) is small ATPAse domain (RuvB-S). Residues 258-336 (AEGFDYMDRK…HFGITPPEMP (79 aa)) form a head domain (RuvB-H) region. Arg-294, Arg-313, and Arg-318 together coordinate DNA.

It belongs to the RuvB family. In terms of assembly, homohexamer. Forms an RuvA(8)-RuvB(12)-Holliday junction (HJ) complex. HJ DNA is sandwiched between 2 RuvA tetramers; dsDNA enters through RuvA and exits via RuvB. An RuvB hexamer assembles on each DNA strand where it exits the tetramer. Each RuvB hexamer is contacted by two RuvA subunits (via domain III) on 2 adjacent RuvB subunits; this complex drives branch migration. In the full resolvosome a probable DNA-RuvA(4)-RuvB(12)-RuvC(2) complex forms which resolves the HJ.

Its subcellular location is the cytoplasm. It catalyses the reaction ATP + H2O = ADP + phosphate + H(+). Functionally, the RuvA-RuvB-RuvC complex processes Holliday junction (HJ) DNA during genetic recombination and DNA repair, while the RuvA-RuvB complex plays an important role in the rescue of blocked DNA replication forks via replication fork reversal (RFR). RuvA specifically binds to HJ cruciform DNA, conferring on it an open structure. The RuvB hexamer acts as an ATP-dependent pump, pulling dsDNA into and through the RuvAB complex. RuvB forms 2 homohexamers on either side of HJ DNA bound by 1 or 2 RuvA tetramers; 4 subunits per hexamer contact DNA at a time. Coordinated motions by a converter formed by DNA-disengaged RuvB subunits stimulates ATP hydrolysis and nucleotide exchange. Immobilization of the converter enables RuvB to convert the ATP-contained energy into a lever motion, pulling 2 nucleotides of DNA out of the RuvA tetramer per ATP hydrolyzed, thus driving DNA branch migration. The RuvB motors rotate together with the DNA substrate, which together with the progressing nucleotide cycle form the mechanistic basis for DNA recombination by continuous HJ branch migration. Branch migration allows RuvC to scan DNA until it finds its consensus sequence, where it cleaves and resolves cruciform DNA. The protein is Holliday junction branch migration complex subunit RuvB of Escherichia coli O17:K52:H18 (strain UMN026 / ExPEC).